We begin with the raw amino-acid sequence, 256 residues long: ATP synthase subunit a (256 aa).

A propeptide spans Met1–Leu8 (removed in mature form). Transmembrane regions (helical) follow at residues Ile34–Leu54, Tyr92–Val112, His121–Leu141, Phe148–Ile168, Ala186–Met206, Gly209–Leu229, and Glu230–Lys250.

This sequence belongs to the ATPase A chain family. As to quaternary structure, F-type ATPases have 2 components, CF(1) - the catalytic core - and CF(0) - the membrane proton channel. CF(1) has five subunits: alpha(3), beta(3), gamma(1), delta(1), epsilon(1). CF(0) has three main subunits: a, b and c.

The protein resides in the mitochondrion inner membrane. Its function is as follows. Mitochondrial membrane ATP synthase (F(1)F(0) ATP synthase or Complex V) produces ATP from ADP in the presence of a proton gradient across the membrane which is generated by electron transport complexes of the respiratory chain. F-type ATPases consist of two structural domains, F(1) - containing the extramembraneous catalytic core and F(0) - containing the membrane proton channel, linked together by a central stalk and a peripheral stalk. During catalysis, ATP synthesis in the catalytic domain of F(1) is coupled via a rotary mechanism of the central stalk subunits to proton translocation. Key component of the proton channel; it may play a direct role in the translocation of protons across the membrane. This chain is ATP synthase subunit a (atp6), found in Emericella nidulans (Aspergillus nidulans).